A 265-amino-acid chain; its full sequence is MDIFQALFLGLLQGLTEFLPISSSAHLILTPAFFGWEDQGVGFDLSVHVGTLLAVVLYFRRDVFGIARDGLISMGQRKIVGQGALAWYLVIGTIPAGLAGLALLDMIDNELRGASVIFFTTLVFGILLGIADWLPKRQRTMDSLNWKDAVIVGIAQAMALVPGTSRSGVTITAGLFLGMTRETASRFSFLLAIPIIVLASAVKLLEVATSDVIVDWNGFLIGGVTSFLMAITAIHFFLKWLNKVGMWPYVIYRIILAGVIYAVLM.

The next 8 helical transmembrane spans lie at 1 to 21 (MDIFQALFLGLLQGLTEFLPI), 39 to 59 (QGVGFDLSVHVGTLLAVVLYF), 84 to 104 (ALAWYLVIGTIPAGLAGLALL), 114 to 134 (ASVIFFTTLVFGILLGIADWL), 144 to 164 (LNWKDAVIVGIAQAMALVPGT), 187 to 207 (FSFLLAIPIIVLASAVKLLEV), 218 to 238 (GFLIGGVTSFLMAITAIHFFL), and 244 to 264 (VGMWPYVIYRIILAGVIYAVL).

This sequence belongs to the UppP family.

The protein localises to the cell inner membrane. The catalysed reaction is di-trans,octa-cis-undecaprenyl diphosphate + H2O = di-trans,octa-cis-undecaprenyl phosphate + phosphate + H(+). Functionally, catalyzes the dephosphorylation of undecaprenyl diphosphate (UPP). Confers resistance to bacitracin. The protein is Undecaprenyl-diphosphatase of Marinobacter nauticus (strain ATCC 700491 / DSM 11845 / VT8) (Marinobacter aquaeolei).